The following is a 95-amino-acid chain: MSRDNKGRRIVVYPAYIDSKKSRSEGRKISLGKAVPNPSIKEIIEASERLGLNPLYEEKHYPRLKEGKGRVLVDKKSGKLEILRMIADEIRKMRG.

It belongs to the SRP19 family. Part of the signal recognition particle protein translocation system, which is composed of SRP and FtsY. Archaeal SRP consists of a 7S RNA molecule of 300 nucleotides and two protein subunits: SRP54 and SRP19.

Its subcellular location is the cytoplasm. Functionally, involved in targeting and insertion of nascent membrane proteins into the cytoplasmic membrane. Binds directly to 7S RNA and mediates binding of the 54 kDa subunit of the SRP. The polypeptide is Signal recognition particle 19 kDa protein (Desulfurococcus amylolyticus (strain DSM 18924 / JCM 16383 / VKM B-2413 / 1221n) (Desulfurococcus kamchatkensis)).